Reading from the N-terminus, the 153-residue chain is ATP synthase subunit b' (153 aa).

The helical transmembrane segment at 23 to 40 (LMAIQVVALTYILNSLFF) threads the bilayer.

It belongs to the ATPase B chain family. In terms of assembly, F-type ATPases have 2 components, F(1) - the catalytic core - and F(0) - the membrane proton channel. F(1) has five subunits: alpha(3), beta(3), gamma(1), delta(1), epsilon(1). F(0) has four main subunits: a(1), b(1), b'(1) and c(10-14). The alpha and beta chains form an alternating ring which encloses part of the gamma chain. F(1) is attached to F(0) by a central stalk formed by the gamma and epsilon chains, while a peripheral stalk is formed by the delta, b and b' chains.

It localises to the cellular thylakoid membrane. Functionally, f(1)F(0) ATP synthase produces ATP from ADP in the presence of a proton or sodium gradient. F-type ATPases consist of two structural domains, F(1) containing the extramembraneous catalytic core and F(0) containing the membrane proton channel, linked together by a central stalk and a peripheral stalk. During catalysis, ATP synthesis in the catalytic domain of F(1) is coupled via a rotary mechanism of the central stalk subunits to proton translocation. In terms of biological role, component of the F(0) channel, it forms part of the peripheral stalk, linking F(1) to F(0). The b'-subunit is a diverged and duplicated form of b found in plants and photosynthetic bacteria. This is ATP synthase subunit b' from Prochlorococcus marinus (strain MIT 9312).